The chain runs to 219 residues: Dephospho-CoA kinase (219 aa).

The 208-residue stretch at 8–215 folds into the DPCK domain; it reads LVGVTGGIGS…EAAASGPDCQ (208 aa). ATP is bound at residue 16–21; sequence GSGKST.

This sequence belongs to the CoaE family.

Its subcellular location is the cytoplasm. The enzyme catalyses 3'-dephospho-CoA + ATP = ADP + CoA + H(+). The protein operates within cofactor biosynthesis; coenzyme A biosynthesis; CoA from (R)-pantothenate: step 5/5. Catalyzes the phosphorylation of the 3'-hydroxyl group of dephosphocoenzyme A to form coenzyme A. The polypeptide is Dephospho-CoA kinase (Chlorobium luteolum (strain DSM 273 / BCRC 81028 / 2530) (Pelodictyon luteolum)).